A 185-amino-acid polypeptide reads, in one-letter code: Virulence membrane protein PagC (185 aa).

The first 23 residues, 1-23, serve as a signal peptide directing secretion; sequence MKNIILSTLVITTSVLVVNVAQA.

The protein belongs to the outer membrane OOP (TC 1.B.6) superfamily. Ail family.

Its subcellular location is the cell outer membrane. Its function is as follows. Essential for full virulence and survival within macrophages. The protein is Virulence membrane protein PagC (pagC) of Salmonella typhimurium (strain LT2 / SGSC1412 / ATCC 700720).